Consider the following 157-residue polypeptide: Myosin essential light chain, striated adductor muscle (157 aa).

EF-hand domains are found at residues 7–44 (DEID…LGIN) and 82–117 (GTFA…LGER).

In molluscan muscle, calcium regulation is associated with myosin rather than with actin. Muscle myosin contains two types of light chains: the catalytic light chain, essential for ATPase activity, and the regulatory light chain, a calcium-binding protein responsible for Ca(2+) dependent binding and Ca(2+) dependent Mg-ATPase activity. The polypeptide is Myosin essential light chain, striated adductor muscle (Argopecten irradians (Bay scallop)).